Reading from the N-terminus, the 215-residue chain is MSSINIALDGPAAAGKSTIAKRVASRLSMIYVDTGAMYRAITYKYLQNGKPENFDYLINNTKLELTYDEVKGQRILLDNQDVTDYLRENDVTHHVSYVASKEPVRSFAVKIQKELAAKKGIVMDGRDIGTVVLPDAELKVYMIASVAERAERRQKENEQRGIESNLEQLKEEIEARDHYDMNREISPLQKAEDAITLDTTGKSIEEVTNEILSLL.

10–18 (GPAAAGKST) contacts ATP.

It belongs to the cytidylate kinase family. Type 1 subfamily.

It is found in the cytoplasm. It catalyses the reaction CMP + ATP = CDP + ADP. It carries out the reaction dCMP + ATP = dCDP + ADP. This chain is Cytidylate kinase, found in Staphylococcus epidermidis (strain ATCC 35984 / DSM 28319 / BCRC 17069 / CCUG 31568 / BM 3577 / RP62A).